Here is a 441-residue protein sequence, read N- to C-terminus: Amino-acid acetyltransferase (441 aa).

The N-acetyltransferase domain maps to 295 to 434; that stretch reads EQVRRATIND…QELYNYQRRS (140 aa).

Belongs to the acetyltransferase family. ArgA subfamily. Homohexamer.

The protein resides in the cytoplasm. It catalyses the reaction L-glutamate + acetyl-CoA = N-acetyl-L-glutamate + CoA + H(+). It functions in the pathway amino-acid biosynthesis; L-arginine biosynthesis; N(2)-acetyl-L-ornithine from L-glutamate: step 1/4. This chain is Amino-acid acetyltransferase, found in Yersinia pseudotuberculosis serotype O:1b (strain IP 31758).